A 116-amino-acid chain; its full sequence is Iron-sulfur cluster insertion protein ErpA (116 aa).

3 residues coordinate iron-sulfur cluster: Cys-44, Cys-108, and Cys-110.

The protein belongs to the HesB/IscA family. Homodimer. The cofactor is iron-sulfur cluster.

Required for insertion of 4Fe-4S clusters for at least IspG. This is Iron-sulfur cluster insertion protein ErpA from Pseudomonas fluorescens (strain Pf0-1).